We begin with the raw amino-acid sequence, 257 residues long: Probable transcriptional regulatory protein SRU_2667 (257 aa).

The segment covering 1–15 has biased composition (basic residues); it reads MAGHTRKWAKVKRKK. Residues 1–25 form a disordered region; the sequence is MAGHTRKWAKVKRKKQKDDRRKSKV.

Belongs to the TACO1 family.

It is found in the cytoplasm. The chain is Probable transcriptional regulatory protein SRU_2667 from Salinibacter ruber (strain DSM 13855 / M31).